The primary structure comprises 442 residues: Proline--tRNA ligase (442 aa).

This sequence belongs to the class-II aminoacyl-tRNA synthetase family. ProS type 2 subfamily. In terms of assembly, homodimer.

The protein localises to the cytoplasm. It carries out the reaction tRNA(Pro) + L-proline + ATP = L-prolyl-tRNA(Pro) + AMP + diphosphate. Catalyzes the attachment of proline to tRNA(Pro) in a two-step reaction: proline is first activated by ATP to form Pro-AMP and then transferred to the acceptor end of tRNA(Pro). In Rhizobium meliloti (strain 1021) (Ensifer meliloti), this protein is Proline--tRNA ligase.